Consider the following 302-residue polypeptide: MNIRDLEYLVALAEHRHFRRAADSCHVSQPTLSGQIRKLEDELGVMLLERTSRKVLFTQAGLLLVEQARTVLREVKVLKEMASQQGETMSGPLHIGLIPTVGPYLLPQIIPMLHRTFPKLEMYLHEAQTHQLLAQLDSGKLDCAILAMVKESEAFIEVPLFDEPMKLAIYQDHPWANRERVAMSDLAGEKLLMLEDGHCLRDQAMGFCFQAGADEDTHFRATSLETLRNMVAAGSGITLLPALSVPRERERDGVCYLPCYKPEPKRTIALVYRPGSPLRGRYEQLADTIREHMQGYMETLSK.

The region spanning 1 to 58 is the HTH lysR-type domain; the sequence is MNIRDLEYLVALAEHRHFRRAADSCHVSQPTLSGQIRKLEDELGVMLLERTSRKVLFT. A DNA-binding region (H-T-H motif) is located at residues 18-37; the sequence is FRRAADSCHVSQPTLSGQIR.

This sequence belongs to the LysR transcriptional regulatory family.

Its function is as follows. Required for the induction of a regulon of hydrogen peroxide inducible genes such as catalase and glutathione-reductase. The sequence is that of Hydrogen peroxide-inducible genes activator (oxyR) from Pectobacterium carotovorum subsp. carotovorum (Erwinia carotovora subsp. carotovora).